The primary structure comprises 496 residues: Glycerol kinase (496 aa).

Position 12 (threonine 12) interacts with ADP. 3 residues coordinate ATP: threonine 12, threonine 13, and serine 14. Threonine 12 is a binding site for sn-glycerol 3-phosphate. An ADP-binding site is contributed by arginine 16. Residues arginine 82, glutamate 83, and tyrosine 134 each contribute to the sn-glycerol 3-phosphate site. Glycerol is bound by residues arginine 82, glutamate 83, and tyrosine 134. At histidine 230 the chain carries Phosphohistidine; by HPr. Position 244 (aspartate 244) interacts with sn-glycerol 3-phosphate. The glycerol site is built by aspartate 244 and glutamine 245. ADP is bound by residues threonine 266 and glycine 309. The ATP site is built by threonine 266, glycine 309, glutamine 313, and glycine 410. ADP is bound by residues glycine 410 and asparagine 414.

Belongs to the FGGY kinase family. In terms of assembly, homotetramer and homodimer (in equilibrium). Post-translationally, the phosphoenolpyruvate-dependent sugar phosphotransferase system (PTS), including enzyme I, and histidine-containing protein (HPr) are required for the phosphorylation, which leads to the activation of the enzyme.

It carries out the reaction glycerol + ATP = sn-glycerol 3-phosphate + ADP + H(+). Its pathway is polyol metabolism; glycerol degradation via glycerol kinase pathway; sn-glycerol 3-phosphate from glycerol: step 1/1. Its activity is regulated as follows. Activated by phosphorylation and inhibited by fructose 1,6-bisphosphate (FBP). Its function is as follows. Key enzyme in the regulation of glycerol uptake and metabolism. Catalyzes the phosphorylation of glycerol to yield sn-glycerol 3-phosphate. The sequence is that of Glycerol kinase from Bacillus cereus (strain ATCC 14579 / DSM 31 / CCUG 7414 / JCM 2152 / NBRC 15305 / NCIMB 9373 / NCTC 2599 / NRRL B-3711).